A 344-amino-acid chain; its full sequence is Dihydroorotate dehydrogenase (quinone) (344 aa).

Residues 65–69 (AGLDK) and threonine 89 contribute to the FMN site. Lysine 69 contributes to the substrate binding site. Residue 114–118 (NRMGF) participates in substrate binding. Residues asparagine 145 and asparagine 178 each contribute to the FMN site. Asparagine 178 contacts substrate. The active-site Nucleophile is the serine 181. Asparagine 183 lines the substrate pocket. FMN-binding residues include lysine 223 and threonine 251. Residue 252–253 (NT) participates in substrate binding. Residues glycine 274, glycine 303, and 324–325 (YS) contribute to the FMN site.

The protein belongs to the dihydroorotate dehydrogenase family. Type 2 subfamily. As to quaternary structure, monomer. It depends on FMN as a cofactor.

Its subcellular location is the cell membrane. It catalyses the reaction (S)-dihydroorotate + a quinone = orotate + a quinol. It functions in the pathway pyrimidine metabolism; UMP biosynthesis via de novo pathway; orotate from (S)-dihydroorotate (quinone route): step 1/1. In terms of biological role, catalyzes the conversion of dihydroorotate to orotate with quinone as electron acceptor. This Cupriavidus necator (strain ATCC 17699 / DSM 428 / KCTC 22496 / NCIMB 10442 / H16 / Stanier 337) (Ralstonia eutropha) protein is Dihydroorotate dehydrogenase (quinone).